The primary structure comprises 239 residues: RNA polymerase sigma factor FliA (239 aa).

Residues 16–88 (LWQRYVPLVR…MLDELRSRDW (73 aa)) are sigma-70 factor domain-2. The Interaction with polymerase core subunit RpoC signature appears at 43 to 46 (DLLQ). Residues 96-166 (NAREVAQAMG…IELVTEEHQQ (71 aa)) form a sigma-70 factor domain-3 region. The tract at residues 185–233 (AIESLPEREQLVLTLYYQEELNLKEIGAVLEVGESRVSQLHSQAIKRLR) is sigma-70 factor domain-4. A DNA-binding region (H-T-H motif) is located at residues 207–226 (LKEIGAVLEVGESRVSQLHS).

The protein belongs to the sigma-70 factor family. FliA subfamily.

It is found in the cytoplasm. Its function is as follows. Sigma factors are initiation factors that promote the attachment of RNA polymerase to specific initiation sites and are then released. This sigma factor controls the expression of flagella-related genes. The polypeptide is RNA polymerase sigma factor FliA (Salmonella typhi).